The following is a 214-amino-acid chain: CASP-like protein 0U1 (214 aa).

Residues Met1 to Gly82 are Cytoplasmic-facing. The helical transmembrane segment at Val83–Phe103 threads the bilayer. Residues Ser104–Glu112 lie on the Extracellular side of the membrane. The helical transmembrane segment at Phe113–Ser133 threads the bilayer. The Cytoplasmic segment spans residues Cys134 to Lys153. A helical membrane pass occupies residues Ala154–Phe174. The Extracellular segment spans residues Lys175–Pro214. The segment at Arg194 to Pro214 is disordered.

It belongs to the Casparian strip membrane proteins (CASP) family. Homodimer and heterodimers.

The protein localises to the cell membrane. This chain is CASP-like protein 0U1, found in Ostreococcus tauri.